The sequence spans 351 residues: DNA polymerase IV (351 aa).

In terms of domain architecture, UmuC spans 4–184 (FIHIDMDCFY…LPLGKIPGVG (181 aa)). Mg(2+)-binding residues include aspartate 8 and aspartate 102. Glutamate 103 is a catalytic residue.

Belongs to the DNA polymerase type-Y family. Monomer. Mg(2+) is required as a cofactor.

The protein localises to the cytoplasm. The catalysed reaction is DNA(n) + a 2'-deoxyribonucleoside 5'-triphosphate = DNA(n+1) + diphosphate. Poorly processive, error-prone DNA polymerase involved in untargeted mutagenesis. Copies undamaged DNA at stalled replication forks, which arise in vivo from mismatched or misaligned primer ends. These misaligned primers can be extended by PolIV. Exhibits no 3'-5' exonuclease (proofreading) activity. May be involved in translesional synthesis, in conjunction with the beta clamp from PolIII. This chain is DNA polymerase IV, found in Pseudoalteromonas translucida (strain TAC 125).